The chain runs to 259 residues: MQISPIAPELIRLENIYVHRDERDILKNIDFSLHQNEIVTLIGPNGAGKSTLIKILLGIIFPNKGKVIAKKKLKMAYVPQKFNPSHSLPLRVCDLLDLEKCSATLREEIIQDTGISKLQTAKVQQLSGGERQRVLLARALLRQPDILVLDEPMQGLDIQSEAELYEYVRSLPERYGCAILMVSHDLQWVMQGTQRVVCLNKHICCSGLPESVQQHPEYLAIFGGQRVPYQHHHDHCAHGDHVEQCNHIDHPHIHPEPEA.

An ABC transporter domain is found at 11–225 (IRLENIYVHR…PEYLAIFGGQ (215 aa)). 43-50 (GPNGAGKS) serves as a coordination point for ATP.

It belongs to the ABC transporter superfamily. Zinc importer (TC 3.A.1.15.5) family. The complex is composed of two ATP-binding proteins (ZnuC), two transmembrane proteins (ZnuB) and a solute-binding protein (ZnuA).

It localises to the cell inner membrane. It catalyses the reaction Zn(2+)(out) + ATP(in) + H2O(in) = Zn(2+)(in) + ADP(in) + phosphate(in) + H(+)(in). In terms of biological role, part of the ABC transporter complex ZnuABC involved in zinc import. Responsible for energy coupling to the transport system. The sequence is that of Zinc import ATP-binding protein ZnuC from Acinetobacter baylyi (strain ATCC 33305 / BD413 / ADP1).